The following is a 655-amino-acid chain: Protein movement modulator (655 aa).

Residues 1 to 54 lie on the Extracellular side of the membrane; sequence MEQPSILVKILHSIPHVNYTFRRVNDTFNPDSDVYLEPTNNKLQCQQKGIELQS. N-linked (GlcNAc...) asparagine glycans are attached at residues asparagine 18 and asparagine 25. A helical transmembrane segment spans residues 55-75; it reads LVILASIPAGLLIGSLLGLLL. Residues 76–95 are Cytoplasmic-facing; that stretch reads YLLTRCCDRRQRKPSAQRCQ. Residues 96–116 traverse the membrane as a helical segment; it reads SCSLVIITLMTCAAIGLGLYG. At 117–231 the chain is on the extracellular side; it reads NDDFHNGLLQ…GEFYESIRWP (115 aa). Residues asparagine 171, asparagine 188, and asparagine 211 are each glycosylated (N-linked (GlcNAc...) asparagine). The helical transmembrane segment at 232 to 252 threads the bilayer; sequence ATLAFLTVLLLLCTVLVIGVA. At 253–258 the chain is on the cytoplasmic side; the sequence is RRSRCT. Residues 259-279 form a helical membrane-spanning segment; that stretch reads LIFFSVSGLFCIIICWLLAGV. At 280–401 the chain is on the extracellular side; that stretch reads YLASSVAAGD…ALRGLCGGGL (122 aa). 2 N-linked (GlcNAc...) asparagine glycosylation sites follow: asparagine 326 and asparagine 372. A helical transmembrane segment spans residues 402-422; the sequence is LGLSLMMVAGLLTSFLLTILV. Over 423–655 the chain is Cytoplasmic; sequence YADSHAWIYL…CKTLESNDFY (233 aa). The tract at residues 446 to 576 is disordered; the sequence is APLFPASNAP…NNHYNNTQHR (131 aa). Residues 450–464 are compositionally biased toward low complexity; that stretch reads PASNAPSASISPTAP. Over residues 465-480 the composition is skewed to polar residues; sequence LSTGTINRTLLHHQQA. Gly residues predominate over residues 482–509; that stretch reads SGGGSGTLPGSGGGAGAGGGVGANGHNG. Low complexity-rich tracts occupy residues 526–539 and 546–576; these read SPSS…STAT and SYHN…TQHR. 2 positions are modified to phosphoserine: serine 597 and serine 599.

The protein belongs to the tweety family.

Its subcellular location is the cell membrane. The catalysed reaction is chloride(in) = chloride(out). Its function is as follows. Probable large-conductance Ca(2+)-activated chloride channel. Modulator of embryonic movement. In Drosophila melanogaster (Fruit fly), this protein is Protein movement modulator.